The following is a 280-amino-acid chain: Protein YIP4b (280 aa).

Polar residues predominate over residues 1 to 15 (MSHNDTIPLYQSSQS). The segment at 1 to 106 (MSHNDTIPLY…SGFGSPPNTL (106 aa)) is disordered. Residues 1-146 (MSHNDTIPLY…DPGKALRDWD (146 aa)) lie on the Cytoplasmic side of the membrane. A helical membrane pass occupies residues 147–167 (LWGPFFFIVFLGLTLSWSASV). Over 168-171 (KKSE) the chain is Lumenal. Transmembrane regions (helical) follow at residues 172–192 (VFAVAFALLAAGAVILTLNVL) and 193–213 (LLGGHIIFFQSLSLLGYCLFP). The Lumenal segment spans residues 214 to 230 (LDVGAVICMLKDNVILK). The chain crosses the membrane as a helical span at residues 231–251 (MVVVSVTLAWSSWAAYPFMSA). The Cytoplasmic portion of the chain corresponds to 252–258 (AVNPRRK). A helical transmembrane segment spans residues 259–279 (ALALYPVFLMYVSVGFLIIAI). Asn-280 is a topological domain (lumenal).

Belongs to the YIP1 family. Homodimer and heterodimer with YIP4A. Component of a trans-Golgi network (TGN)-localized ECH/YIP4 complex made of ECH, YIP4A and YIP4B. Interacts directly with ECH. Expressed in developing root hair cells.

The protein localises to the golgi apparatus. It localises to the trans-Golgi network membrane. In terms of biological role, together with YIP4A, involved in the regulation of cell elongation during root and hypocotyl growth. YIP4A and YIP4B are central trafficking components in Rho-of-plant (ROPs, e.g. ARAC4/ROP2, ARAC5/ROP4 and ARAC3/ROP6) small GTPases-dependent root hair formation, thus contributing to activation and plasma membrane accumulation of ROPs during hair initiation. The ECH/YIP4 complex is involved in the modulation of the trans-Golgi network (TGN)-mediated trafficking of some proteins and cell wall components (e.g. pectin and hemicellulose) to the cell wall in dark-grown hypocotyls and in secretory cells of the seed coat. The polypeptide is Protein YIP4b (Arabidopsis thaliana (Mouse-ear cress)).